Reading from the N-terminus, the 449-residue chain is MAFARRLLRGPLSGPLLGRRGVCAGAMAPPRRFVLELPDCTLAHFALGADAPGDADAPDPRLAALLGPPERSYSLCVPVTPDAGCGARVRAARLHQRLLHQLRRGPFQRCQLLRLLCYCPGGQAGGAQQGFLLRDPLDDPDTRQALLELLGACQEAPRPHLGEFEADPRGQLWQRLWEVQDGRRLQVGCAQVVPVPEPPLHPVVPDLPSSVVFPDREAARAVLEECTSFIPEARAVLDLVDQCPKQIQKGKFQVVAIEGLDATGKTTVTQSVADSLKAVLLKSPPSCIGQWRKIFDDEPTIIRRAFYSLGNYIVASEIAKESAKSPVIVDRYWHSTATYAIATEVSGGLQHLPPAHHPVYQWPEDLLKPDLILLLTVSPEERLQRLQGRGMEKTREEAELEANSVFRQKVEMSYQRMENPGCHVVDASPSREKVLQTVLSLIQNSFSEP.

A mitochondrion-targeting transit peptide spans 1-98 (MAFARRLLRG…VRAARLHQRL (98 aa)). 259 to 266 (GLDATGKT) is an ATP binding site. Residues 380-412 (EERLQRLQGRGMEKTREEAELEANSVFRQKVEM) adopt a coiled-coil conformation.

The protein belongs to the thymidylate kinase family. High levels are observed in myeloid, lymphoid and mesenchymal tissues.

It is found in the mitochondrion. The catalysed reaction is CMP + ATP = CDP + ADP. It carries out the reaction dCMP + ATP = dCDP + ADP. It catalyses the reaction a 2'-deoxyribonucleoside 5'-diphosphate + ATP = a 2'-deoxyribonucleoside 5'-triphosphate + ADP. The enzyme catalyses a ribonucleoside 5'-diphosphate + ATP = a ribonucleoside 5'-triphosphate + ADP. Its function is as follows. Mitochondrial nucleotide monophosphate kinase needed for salvage dNTP synthesis that mediates immunomodulatory and antiviral activities through IFN-dependent and IFN-independent pathways. Restricts the replication of multiple viruses including flaviviruses or coronaviruses. Together with viperin/RSAD2 and ddhCTP, suppresses the replication of several coronaviruses through inhibition of the viral RNA-dependent RNA polymerase activities. Concerning flaviviruses, restricts RNA translation when localized to the mitochondria independently of its kinase activity. Is able to phosphorylate dUMP, dCMP, CMP, UMP and monophosphates of the pyrimidine nucleoside analogs ddC, dFdC, araC, BVDU and FdUrd with ATP as phosphate donor. Efficacy is highest for dUMP followed by dCMP while CMP and UMP are poor substrates. Controls therefore mitochondrial DNA synthesis by supplying required deoxyribonucleotides. CMPK2-dependent mitochondrial DNA synthesis is necessary for the production of oxidized mitochondrial DNA fragments after exposure to NLRP3 activators. In turn, cytosolic oxidized mtDNA associates with the NLRP3 inflammasome complex and is required for its activation. The polypeptide is UMP-CMP kinase 2, mitochondrial (CMPK2) (Homo sapiens (Human)).